Here is a 315-residue protein sequence, read N- to C-terminus: MKTRKVVLIGCGAVGTSFLYSALNQGLFDEYVLIDAFDNLSKGNAWDFEDANAIMSTPAGMIKSGTYEDCADADVVVITAGVPQKPGGETRLQLVGRNAKIMEEIATNVKDSGFDGITVIASNPVDIMGSVYAKVTGFEPNKVIPSGTILDSARLQWEVAKRIKINPASLEVYVVGEHGDSSVSVFSQASVGSIPLSKYRKFSDSQKRAIHKDVMRKAYKIINTKRATFYGIGACLARICKAVLRDENVILPVSIKKNADSDIYIGWPAVVGKDGWHSPLKLTLLAEEKRGFQKSYNSLKKVFEVTWSELGRSEY.

Residues Val-14, Asp-35, Tyr-67, and 81 to 82 each bind NAD(+); that span reads GV. Substrate contacts are provided by residues Gln-84, Arg-91, and 123 to 126; that span reads NPVD. Residues 121 to 123 and Ser-146 contribute to the NAD(+) site; that span reads ASN. Residue 151-154 coordinates substrate; sequence DSAR. The active-site Proton acceptor is His-178. Tyr-219 is modified (phosphotyrosine). Thr-228 contributes to the substrate binding site.

Belongs to the LDH/MDH superfamily. LDH family. As to quaternary structure, homotetramer.

Its subcellular location is the cytoplasm. It catalyses the reaction (S)-lactate + NAD(+) = pyruvate + NADH + H(+). It participates in fermentation; pyruvate fermentation to lactate; (S)-lactate from pyruvate: step 1/1. Its function is as follows. Catalyzes the conversion of lactate to pyruvate. The polypeptide is L-lactate dehydrogenase (Malacoplasma penetrans (strain HF-2) (Mycoplasma penetrans)).